The primary structure comprises 395 residues: Imidazolonepropionase (395 aa).

Fe(3+) contacts are provided by His63 and His65. His63 and His65 together coordinate Zn(2+). 3 residues coordinate 4-imidazolone-5-propanoate: Arg72, Tyr135, and His168. Tyr135 is an N-formimidoyl-L-glutamate binding site. His233 provides a ligand contact to Fe(3+). Zn(2+) is bound at residue His233. Gln236 is a binding site for 4-imidazolone-5-propanoate. Position 308 (Asp308) interacts with Fe(3+). Residue Asp308 coordinates Zn(2+). N-formimidoyl-L-glutamate-binding residues include Asn310 and Gly312. Thr313 provides a ligand contact to 4-imidazolone-5-propanoate.

This sequence belongs to the metallo-dependent hydrolases superfamily. HutI family. Zn(2+) is required as a cofactor. The cofactor is Fe(3+).

The protein localises to the cytoplasm. The enzyme catalyses 4-imidazolone-5-propanoate + H2O = N-formimidoyl-L-glutamate. The protein operates within amino-acid degradation; L-histidine degradation into L-glutamate; N-formimidoyl-L-glutamate from L-histidine: step 3/3. Catalyzes the hydrolytic cleavage of the carbon-nitrogen bond in imidazolone-5-propanoate to yield N-formimidoyl-L-glutamate. It is the third step in the universal histidine degradation pathway. In Cereibacter sphaeroides (strain ATCC 17029 / ATH 2.4.9) (Rhodobacter sphaeroides), this protein is Imidazolonepropionase.